The sequence spans 456 residues: Bifunctional protein GlmU (456 aa).

The pyrophosphorylase stretch occupies residues 1–228; sequence MPQNTLNTVI…SHLAAGVNNK (228 aa). UDP-N-acetyl-alpha-D-glucosamine contacts are provided by residues 11–14, Lys-25, Gln-75, 80–81, 102–104, Gly-138, Glu-153, Asn-168, and Asn-226; these read LAAG, GT, and YGD. Residue Asp-104 participates in Mg(2+) binding. Asn-226 is a binding site for Mg(2+). The interval 229–249 is linker; the sequence is RQLAELERIFQTEQAQELLKA. An N-acetyltransferase region spans residues 250-456; it reads GVTLRDPARF…GWVRPEKNKQ (207 aa). Positions 332 and 350 each coordinate UDP-N-acetyl-alpha-D-glucosamine. His-362 acts as the Proton acceptor in catalysis. Tyr-365 and Asn-376 together coordinate UDP-N-acetyl-alpha-D-glucosamine. Acetyl-CoA contacts are provided by residues Ala-379, 385-386, Ser-404, Ala-422, and Arg-439; that span reads NY.

The protein in the N-terminal section; belongs to the N-acetylglucosamine-1-phosphate uridyltransferase family. In the C-terminal section; belongs to the transferase hexapeptide repeat family. Homotrimer. The cofactor is Mg(2+).

The protein localises to the cytoplasm. The catalysed reaction is alpha-D-glucosamine 1-phosphate + acetyl-CoA = N-acetyl-alpha-D-glucosamine 1-phosphate + CoA + H(+). It carries out the reaction N-acetyl-alpha-D-glucosamine 1-phosphate + UTP + H(+) = UDP-N-acetyl-alpha-D-glucosamine + diphosphate. It participates in nucleotide-sugar biosynthesis; UDP-N-acetyl-alpha-D-glucosamine biosynthesis; N-acetyl-alpha-D-glucosamine 1-phosphate from alpha-D-glucosamine 6-phosphate (route II): step 2/2. Its pathway is nucleotide-sugar biosynthesis; UDP-N-acetyl-alpha-D-glucosamine biosynthesis; UDP-N-acetyl-alpha-D-glucosamine from N-acetyl-alpha-D-glucosamine 1-phosphate: step 1/1. The protein operates within bacterial outer membrane biogenesis; LPS lipid A biosynthesis. In terms of biological role, catalyzes the last two sequential reactions in the de novo biosynthetic pathway for UDP-N-acetylglucosamine (UDP-GlcNAc). The C-terminal domain catalyzes the transfer of acetyl group from acetyl coenzyme A to glucosamine-1-phosphate (GlcN-1-P) to produce N-acetylglucosamine-1-phosphate (GlcNAc-1-P), which is converted into UDP-GlcNAc by the transfer of uridine 5-monophosphate (from uridine 5-triphosphate), a reaction catalyzed by the N-terminal domain. This Neisseria gonorrhoeae protein is Bifunctional protein GlmU.